Reading from the N-terminus, the 800-residue chain is Phenylalanine--tRNA ligase beta subunit (800 aa).

The tRNA-binding domain maps to 39 to 154 (TKDIKNLVVG…ESQVPGTDAL (116 aa)). In terms of domain architecture, B5 spans 408–483 (AFITPIDITA…RIYGYDDIPS (76 aa)). Mg(2+) is bound by residues Asp-461, Asp-467, Glu-470, and Glu-471. In terms of domain architecture, FDX-ACB spans 708–800 (PRFPGMSRDI…ALIEQGAVIR (93 aa)).

It belongs to the phenylalanyl-tRNA synthetase beta subunit family. Type 1 subfamily. As to quaternary structure, tetramer of two alpha and two beta subunits. Mg(2+) serves as cofactor.

Its subcellular location is the cytoplasm. It carries out the reaction tRNA(Phe) + L-phenylalanine + ATP = L-phenylalanyl-tRNA(Phe) + AMP + diphosphate + H(+). The chain is Phenylalanine--tRNA ligase beta subunit from Staphylococcus aureus.